The primary structure comprises 251 residues: Derlin-1 (251 aa).

An N-acetylserine modification is found at Ser-2. Residues 2–15 lie on the Cytoplasmic side of the membrane; that stretch reads SDIGDWFRSIPTIT. A helical membrane pass occupies residues 16-31; sequence RYWFAATVAVPLVGKL. Topologically, residues 32 to 69 are lumenal; sequence GLISPAYFFLWPEAFLYRFQIWRPITATFYFPVGPGTG. A helical membrane pass occupies residues 70–89; that stretch reads FLYLVNLYFLYQYSTRLETG. Topologically, residues 90–94 are cytoplasmic; sequence AFDGR. Residues 95–115 form a helical membrane-spanning segment; it reads PADYLFMLLFNWICIVITGLA. Topologically, residues 116–122 are lumenal; sequence MDMQLLM. A helical membrane pass occupies residues 123-137; sequence IPLIMSVLYVWAQLN. Topologically, residues 138 to 154 are cytoplasmic; it reads RDMIVSFWFGTRFKACY. A helical transmembrane segment spans residues 155-166; that stretch reads LPWVILGFNYII. At 167 to 170 the chain is on the lumenal side; the sequence is GGSV. A helical membrane pass occupies residues 171–189; that stretch reads INELIGNLVGHLYFFLMFR. Topologically, residues 190-251 are cytoplasmic; the sequence is YPMDLGGRNF…WGQGFRLGDQ (62 aa). Ser-201 carries the post-translational modification Phosphoserine. Thr-202 carries the phosphothreonine modification. Ser-226 is modified (phosphoserine). A disordered region spans residues 229–251; sequence RAADQNGGGGRHNWGQGFRLGDQ. An SHP-box motif is present at residues 241–248; that stretch reads NWGQGFRL.

Belongs to the derlin family. In terms of assembly, homotetramer. The four subunits of the tetramer are arranged in a twofold symmetry. Forms homo- and heterooligomers with DERL2 and DERL3; binding to DERL3 is poorer than that between DERL2 and DERL3. Interacts (via SHP-box motif) with VCP. Interacts with AMFR, SELENOS, SEL1L, SELENOK and SYVN1, as well as with SEL1L-SYVN1 and VCP-SELENOS protein complexes; this interaction is weaker than that observed between DERL2 and these complexes. Interacts with NGLY1 and YOD1. Does not bind to EDEM1. Interacts with DNAJB9. Interacts with RNF103. Interacts with HM13. Interacts with XBP1 isoform 1 (via luminal/ectodomain domain); the interaction obviates the need for ectodomain shedding prior HM13/SPP-mediated XBP1 isoform 1 cleavage. Interacts with the signal recognition particle/SRP and the SRP receptor; in the process of endoplasmic reticulum stress-induced pre-emptive quality control. May interact with UBXN6. Interacts with ZFAND2B; probably through VCP. Interacts with CCDC47. Interacts with C18orf32. May interact with TRAM1. Forms a complex with SVIP and VCP/p97.

It localises to the endoplasmic reticulum membrane. Functional component of endoplasmic reticulum-associated degradation (ERAD) for misfolded lumenal proteins. Forms homotetramers which encircle a large channel traversing the endoplasmic reticulum (ER) membrane. This allows the retrotranslocation of misfolded proteins from the ER into the cytosol where they are ubiquitinated and degraded by the proteasome. The channel has a lateral gate within the membrane which provides direct access to membrane proteins with no need to reenter the ER lumen first. May mediate the interaction between VCP and the misfolded protein. Also involved in endoplasmic reticulum stress-induced pre-emptive quality control, a mechanism that selectively attenuates the translocation of newly synthesized proteins into the endoplasmic reticulum and reroutes them to the cytosol for proteasomal degradation. By controlling the steady-state expression of the IGF1R receptor, indirectly regulates the insulin-like growth factor receptor signaling pathway. In Bos taurus (Bovine), this protein is Derlin-1.